Here is a 343-residue protein sequence, read N- to C-terminus: MTTNKQVIFKDHVSGFPKESDFNFTTTTVELRVPEGSKSVLVKNLYLSCDPYMRSRMGKPDPSSALAQAYAPGKPIYGYGVSRVIESGHPDYKKGDLLWGIVGWEEYSVITPMAHMHFKIQHTDVPLSYYTGLLGMPGMTAYAGFYEVCSPKKGETVYVSAASGAVGQLVGQFAKMMGCYVVGSAGSKEKVDLLKTKFGFDDAFNYKEESDLSAALKRCFPKGIDMYFENVGGKMLDAVLLNMNPHGRIAVCGMISQYNLENQEGVHNLSNIIYKRIRIQGFVVADFYDKYPKFLELVLPRIKEGKITYVEDVADGLEKAPEALVGLFHGKNVGKQVVVIARE.

Residues tyrosine 52 and tyrosine 79 each contribute to the substrate site. NADP(+) contacts are provided by residues 164–167, lysine 190, tyrosine 206, asparagine 230, 252–258, 282–284, and asparagine 332; these read GAVG, CGMISQY, and FVV.

Belongs to the NADP-dependent oxidoreductase L4BD family. As to quaternary structure, homodimer.

The enzyme catalyses an n-alkanal + NAD(+) = an alk-2-enal + NADH + H(+). The catalysed reaction is an n-alkanal + NADP(+) = an alk-2-enal + NADPH + H(+). In terms of biological role, catalyzes the reduction of the 7-8 double bond of phenylpropanal substrates, such as p-coumaryl aldehyde and coniferyl aldehyde (in vitro). Has activity towards toxic substrates, such as 4-hydroxy-(2E)-nonenal (in vitro). May play a distinct role in plant antioxidant defense and is possibly involved in NAD(P)/NAD(P)h homeostasis. The sequence is that of NADP-dependent alkenal double bond reductase P2 (P2) from Arabidopsis thaliana (Mouse-ear cress).